Reading from the N-terminus, the 199-residue chain is Putative DNA-directed RNA polymerase subunit L376 (199 aa).

Belongs to the eukaryotic RPB7/RPC8 RNA polymerase subunit family.

The protein localises to the virion. The enzyme catalyses RNA(n) + a ribonucleoside 5'-triphosphate = RNA(n+1) + diphosphate. The sequence is that of Putative DNA-directed RNA polymerase subunit L376 from Acanthamoeba polyphaga (Amoeba).